A 199-amino-acid chain; its full sequence is GTP cyclohydrolase-2 (199 aa).

50–54 (RIHSE) is a GTP binding site. Cys-55, Cys-66, and Cys-68 together coordinate Zn(2+). GTP-binding positions include Gln-71, 93 to 95 (EGR), and Thr-115. Residue Asp-127 is the Proton acceptor of the active site. Arg-129 (nucleophile) is an active-site residue. GTP contacts are provided by Thr-150 and Lys-155.

Belongs to the GTP cyclohydrolase II family. As to quaternary structure, homodimer. Zn(2+) serves as cofactor.

It carries out the reaction GTP + 4 H2O = 2,5-diamino-6-hydroxy-4-(5-phosphoribosylamino)-pyrimidine + formate + 2 phosphate + 3 H(+). It functions in the pathway cofactor biosynthesis; riboflavin biosynthesis; 5-amino-6-(D-ribitylamino)uracil from GTP: step 1/4. Functionally, catalyzes the conversion of GTP to 2,5-diamino-6-ribosylamino-4(3H)-pyrimidinone 5'-phosphate (DARP), formate and pyrophosphate. This Buchnera aphidicola subsp. Baizongia pistaciae (strain Bp) protein is GTP cyclohydrolase-2.